The following is a 319-amino-acid chain: Malate dehydrogenase (319 aa).

Residues 10–15 and Asp34 each bind NAD(+); that span reads GAGNIG. Positions 83 and 89 each coordinate substrate. NAD(+)-binding positions include Asn96 and 119-121; that span reads ITN. Residues Asn121 and Arg152 each coordinate substrate. His176 (proton acceptor) is an active-site residue.

The protein belongs to the LDH/MDH superfamily. MDH type 3 family.

It catalyses the reaction (S)-malate + NAD(+) = oxaloacetate + NADH + H(+). In terms of biological role, catalyzes the reversible oxidation of malate to oxaloacetate. The chain is Malate dehydrogenase from Francisella tularensis subsp. holarctica (strain FTNF002-00 / FTA).